The chain runs to 249 residues: Isoprenyl transferase (249 aa).

Residue D25 is part of the active site. D25 is a Mg(2+) binding site. Residues 26–29, W30, R38, H42, and 70–72 contribute to the substrate site; these read GNGR and STE. The active-site Proton acceptor is N73. Substrate-binding positions include W74, R76, R197, and 203–205; that span reads RLS. Mg(2+) is bound at residue E216.

Belongs to the UPP synthase family. Homodimer. The cofactor is Mg(2+).

Functionally, catalyzes the condensation of isopentenyl diphosphate (IPP) with allylic pyrophosphates generating different type of terpenoids. This Streptococcus pyogenes serotype M1 protein is Isoprenyl transferase.